The chain runs to 208 residues: V-type ATP synthase subunit D (208 aa).

The protein belongs to the V-ATPase D subunit family.

Functionally, produces ATP from ADP in the presence of a proton gradient across the membrane. The chain is V-type ATP synthase subunit D from Chlamydia felis (strain Fe/C-56) (Chlamydophila felis).